Here is a 273-residue protein sequence, read N- to C-terminus: NH(3)-dependent NAD(+) synthetase (273 aa).

An ATP-binding site is contributed by 45 to 52; that stretch reads GISGGQDS. Aspartate 51 is a binding site for Mg(2+). Arginine 139 lines the deamido-NAD(+) pocket. Threonine 159 is a binding site for ATP. Glutamate 164 is a Mg(2+) binding site. 2 residues coordinate deamido-NAD(+): lysine 172 and aspartate 179. Residues lysine 188 and threonine 210 each contribute to the ATP site. 259 to 260 is a deamido-NAD(+) binding site; sequence HK.

The protein belongs to the NAD synthetase family. As to quaternary structure, homodimer.

It carries out the reaction deamido-NAD(+) + NH4(+) + ATP = AMP + diphosphate + NAD(+) + H(+). It functions in the pathway cofactor biosynthesis; NAD(+) biosynthesis; NAD(+) from deamido-NAD(+) (ammonia route): step 1/1. In terms of biological role, catalyzes the ATP-dependent amidation of deamido-NAD to form NAD. Uses ammonia as a nitrogen source. The chain is NH(3)-dependent NAD(+) synthetase from Bacillus pumilus (strain SAFR-032).